We begin with the raw amino-acid sequence, 717 residues long: Methylcrotonoyl-CoA carboxylase subunit alpha, mitochondrial (717 aa).

Residues 1-38 (MAAAALLAAVDRNQLRRVPILLLQPREWAWKLRTMKYG) constitute a mitochondrion transit peptide. Residues 45 to 490 (ITKVLIANRG…HTDFIPQHHK (446 aa)) form the Biotin carboxylation domain. An ATP-binding site is contributed by Lys159. An ATP-grasp domain is found at 163 to 360 (KSIMAAAGVP…LVEWQLRIAA (198 aa)). N6-acetyllysine occurs at positions 180 and 193. ATP contacts are provided by residues Lys201 and 207–208 (GG). Lys233 is modified (N6-acetyllysine). 3 residues coordinate ATP: His251, His278, and Glu318. The active site involves Arg335. Lys490 carries the N6-acetyllysine modification. The residue at position 577 (Lys577) is an N6-acetyllysine; alternate. Lys577 carries the post-translational modification N6-succinyllysine; alternate. A Biotinyl-binding domain is found at 622-711 (SIEVGIPVPK…NRHAPLVEFE (90 aa)). Residue Lys677 is modified to N6-biotinyllysine.

Probably a dodecamer composed of six biotin-containing alpha subunits (MCCC1) and six beta (MCCC2) subunits. Interacts (via the biotin carboxylation domain) with SIRT4. Biotin serves as cofactor. Post-translationally, acetylated.

It is found in the mitochondrion matrix. The enzyme catalyses 3-methylbut-2-enoyl-CoA + hydrogencarbonate + ATP = 3-methyl-(2E)-glutaconyl-CoA + ADP + phosphate + H(+). It functions in the pathway amino-acid degradation; L-leucine degradation; (S)-3-hydroxy-3-methylglutaryl-CoA from 3-isovaleryl-CoA: step 2/3. Functionally, biotin-attachment subunit of the 3-methylcrotonyl-CoA carboxylase, an enzyme that catalyzes the conversion of 3-methylcrotonyl-CoA to 3-methylglutaconyl-CoA, a critical step for leucine and isovaleric acid catabolism. This Mus musculus (Mouse) protein is Methylcrotonoyl-CoA carboxylase subunit alpha, mitochondrial (Mccc1).